Reading from the N-terminus, the 336-residue chain is Phosphate acyltransferase (336 aa).

This sequence belongs to the PlsX family. In terms of assembly, homodimer. Probably interacts with PlsY.

The protein resides in the cytoplasm. The enzyme catalyses a fatty acyl-[ACP] + phosphate = an acyl phosphate + holo-[ACP]. Its pathway is lipid metabolism; phospholipid metabolism. Catalyzes the reversible formation of acyl-phosphate (acyl-PO(4)) from acyl-[acyl-carrier-protein] (acyl-ACP). This enzyme utilizes acyl-ACP as fatty acyl donor, but not acyl-CoA. The chain is Phosphate acyltransferase from Pseudomonas putida (strain GB-1).